The sequence spans 392 residues: Sulfate adenylyltransferase (392 aa).

It belongs to the sulfate adenylyltransferase family.

It catalyses the reaction sulfate + ATP + H(+) = adenosine 5'-phosphosulfate + diphosphate. It participates in sulfur metabolism; hydrogen sulfide biosynthesis; sulfite from sulfate: step 1/3. The chain is Sulfate adenylyltransferase from Nostoc punctiforme (strain ATCC 29133 / PCC 73102).